Reading from the N-terminus, the 212-residue chain is Ras-related protein Rab-2A (212 aa).

GTP is bound by residues G16, V17, G18, K19, S20, C21, and T38. A Mg(2+)-binding site is contributed by S20. The Switch 1 signature appears at 37–42 (LTIGVE). Residues T38 and D61 each contribute to the Mg(2+) site. Residues 63–72 (AGQESFRSIT) carry the Switch 2 motif. Positions 64, 119, 120, 122, 150, and 151 each coordinate GTP. Residues C211 and C212 are each lipidated (S-geranylgeranyl cysteine).

It belongs to the small GTPase superfamily. Rab family. Interacts with PRKCI. Interacts with TRIP11. Interacts (in GTP-bound form) with GARIN1B. Mg(2+) serves as cofactor. Prenylated. Prenylation is required for association with cellular membranes.

It localises to the endoplasmic reticulum-Golgi intermediate compartment membrane. The protein resides in the melanosome. The protein localises to the endoplasmic reticulum membrane. Its subcellular location is the golgi apparatus membrane. It is found in the cytoplasmic vesicle. It localises to the secretory vesicle. The protein resides in the acrosome. The enzyme catalyses GTP + H2O = GDP + phosphate + H(+). Regulated by guanine nucleotide exchange factors (GEFs) which promote the exchange of bound GDP for free GTP, GTPase activating proteins (GAPs) which increase the GTP hydrolysis activity, and GDP dissociation inhibitors (GDIs) which inhibit the dissociation of the nucleotide from the GTPase. Functionally, the small GTPases Rab are key regulators of intracellular membrane trafficking, from the formation of transport vesicles to their fusion with membranes. Rabs cycle between active GTP-bound and inactive GDP-bound states. In their active state, drive transport of vesicular carriers from donor organelles to acceptor organelles to regulate the membrane traffic that maintains organelle identity and morphology. RAB2A regulates autophagy by promoting autophagosome-lysosome fusion via recruitment of the HOPS endosomal tethering complex; this process involves autophagosomal RAB2A and lysosomal RAB39A recruitment of HOPS subcomplexes VPS39-VPS11 and VPS41-VPS16-VPS18-VPS33A, respectively, which assemble into a functional complex to mediate membrane tethering and SNAREs-driven membrane fusion. Required for protein transport from the endoplasmic reticulum to the Golgi complex. Regulates the compacted morphology of the Golgi. Together with RAB2B, redundantly required for efficient autophagic flux. The protein is Ras-related protein Rab-2A (RAB2A) of Gallus gallus (Chicken).